The following is a 492-amino-acid chain: Cysteine--tRNA ligase (492 aa).

C29 serves as a coordination point for Zn(2+). The 'HIGH' region signature appears at 31-41 (PTVYDYAHIGN). Positions 222, 247, and 251 each coordinate Zn(2+). A 'KMSKS' region motif is present at residues 279-283 (KMSKS). Residue K282 participates in ATP binding.

This sequence belongs to the class-I aminoacyl-tRNA synthetase family. In terms of assembly, monomer. Zn(2+) is required as a cofactor.

The protein localises to the cytoplasm. It carries out the reaction tRNA(Cys) + L-cysteine + ATP = L-cysteinyl-tRNA(Cys) + AMP + diphosphate. The chain is Cysteine--tRNA ligase from Treponema denticola (strain ATCC 35405 / DSM 14222 / CIP 103919 / JCM 8153 / KCTC 15104).